The primary structure comprises 376 residues: Actin-like protein 53D (376 aa).

Residues 1 to 40 form a necessary and sufficient for recruitment to the fusome and actin cones of spermatocyte cysts region; the sequence is MSSEVDSNSHHAAVVIDNGSGVCKAGFSPEDTPRAVFPSI.

Belongs to the actin family. ARP1 subfamily. As to expression, high expression in males whereas expression in females is very low. In adult males, highest levels of expression are in the testis. In adult females, expressed only in the ovaries at very low levels. In larvae, highly expressed in the imaginal disk whereas in prepupae and pupae modest levels of expression occur in the fat body.

It localises to the cytoplasm. Its subcellular location is the cytoskeleton. Functionally, required for optimal embryo development, particularly under heat stress conditions. Also appears to have a role in negatively regulating spermatocyte cyst development. Under heat stress conditions, required for the correct organization and migration of nuclei during early embryogenesis, and therefore possibly functions by regulating embryonic actin networks during the heat stress response. This is Actin-like protein 53D from Drosophila melanogaster (Fruit fly).